The sequence spans 693 residues: Probable L-type lectin-domain containing receptor kinase VI.1 (693 aa).

An N-terminal signal peptide occupies residues 1–22; that stretch reads MGIARSINSFMFFFFLMILSNA. 7 N-linked (GlcNAc...) asparagine glycosylation sites follow: N21, N44, N71, N89, N141, N180, and N223. The Extracellular segment spans residues 23 to 311; sequence SKSSVLAEAT…SNKKGYNSQV (289 aa). The tract at residues 33-279 is legume-lectin like; that stretch reads TAKFTFIGFK…AHYVMGWSFS (247 aa). Residues 312–332 traverse the membrane as a helical segment; the sequence is IVLIVALSIVTLVLLVLLFIF. The Cytoplasmic segment spans residues 333 to 693; that stretch reads VMYKRRIQEE…VSSSSIVSGR (361 aa). The 275-residue stretch at 368-642 folds into the Protein kinase domain; it reads FKESEIIGTG…LRYLNGEENV (275 aa). ATP contacts are provided by residues 374-382 and K396; that span reads IGTGGFGIV. The active-site Proton acceptor is D495. The disordered stretch occupies residues 670-693; it reads DRASSSNTFSSFSNVSSSSIVSGR.

It in the C-terminal section; belongs to the protein kinase superfamily. Ser/Thr protein kinase family. In the N-terminal section; belongs to the leguminous lectin family.

It is found in the cell membrane. The catalysed reaction is L-seryl-[protein] + ATP = O-phospho-L-seryl-[protein] + ADP + H(+). The enzyme catalyses L-threonyl-[protein] + ATP = O-phospho-L-threonyl-[protein] + ADP + H(+). The chain is Probable L-type lectin-domain containing receptor kinase VI.1 (LECRK61) from Arabidopsis thaliana (Mouse-ear cress).